We begin with the raw amino-acid sequence, 318 residues long: Cytochrome f (318 aa).

The first 32 residues, 1–32, serve as a signal peptide directing secretion; sequence MQNKNNYNWLKEWVIRSFLLLTLLTWPSVSNA. Heme contacts are provided by Tyr-33, Cys-53, Cys-56, and His-57. A helical transmembrane segment spans residues 284–304; sequence IQGLLLFFASVVLAQIFLVLK.

This sequence belongs to the cytochrome f family. The 4 large subunits of the cytochrome b6-f complex are cytochrome b6, subunit IV (17 kDa polypeptide, petD), cytochrome f and the Rieske protein, while the 4 small subunits are PetG, PetL, PetM and PetN. The complex functions as a dimer. Requires heme as cofactor.

It localises to the plastid. Its subcellular location is the chloroplast thylakoid membrane. Its function is as follows. Component of the cytochrome b6-f complex, which mediates electron transfer between photosystem II (PSII) and photosystem I (PSI), cyclic electron flow around PSI, and state transitions. The chain is Cytochrome f from Angiopteris evecta (Mule's foot fern).